Here is a 149-residue protein sequence, read N- to C-terminus: Large ribosomal subunit protein bL9 (149 aa).

It belongs to the bacterial ribosomal protein bL9 family.

In terms of biological role, binds to the 23S rRNA. The chain is Large ribosomal subunit protein bL9 from Haemophilus ducreyi (strain 35000HP / ATCC 700724).